The sequence spans 196 residues: MIPVVIEQTSRGERSYDIYSRLLKDRIIMLTGPVEDNMANSIIAQLLFLDAQDNTKDIYLYVNTPGGSVSAGLAIVDTMNFIKSDVQTIVMGVAASMGTIIASSGAKGKRFMLPNAEYLIHQPMGGAGSGTQQTDMAIVAEHLLRTRNTLEKILAENSGKSVEQIHKDAERDYWMSAQETLEYGFIDEIMENSNLS.

S96 acts as the Nucleophile in catalysis. H121 is an active-site residue.

The protein belongs to the peptidase S14 family. As to quaternary structure, fourteen ClpP subunits assemble into 2 heptameric rings which stack back to back to give a disk-like structure with a central cavity, resembling the structure of eukaryotic proteasomes.

It is found in the cytoplasm. It catalyses the reaction Hydrolysis of proteins to small peptides in the presence of ATP and magnesium. alpha-casein is the usual test substrate. In the absence of ATP, only oligopeptides shorter than five residues are hydrolyzed (such as succinyl-Leu-Tyr-|-NHMec, and Leu-Tyr-Leu-|-Tyr-Trp, in which cleavage of the -Tyr-|-Leu- and -Tyr-|-Trp bonds also occurs).. Functionally, cleaves peptides in various proteins in a process that requires ATP hydrolysis. Has a chymotrypsin-like activity. Plays a major role in the degradation of misfolded proteins. This chain is ATP-dependent Clp protease proteolytic subunit, found in Streptococcus sanguinis (strain SK36).